Here is a 123-residue protein sequence, read N- to C-terminus: uncharacterized protein (123 aa).

The disordered stretch occupies residues 89–123 (GVGGRKLGSEGQSLSENSEQRSLMRWGCGGSSERR). Residues 98–109 (EGQSLSENSEQR) show a composition bias toward polar residues.

This is an uncharacterized protein from Encephalitozoon cuniculi (strain GB-M1) (Microsporidian parasite).